Here is a 241-residue protein sequence, read N- to C-terminus: Octanoyltransferase (241 aa).

Residues 49–233 (GEASELVWLL…AFGEVFGPSE (185 aa)) form the BPL/LPL catalytic domain. Substrate is bound by residues 87–94 (RGGQVTYH), 162–164 (AIG), and 175–177 (GIS). Catalysis depends on Cys-193, which acts as the Acyl-thioester intermediate.

Belongs to the LipB family.

It localises to the cytoplasm. The enzyme catalyses octanoyl-[ACP] + L-lysyl-[protein] = N(6)-octanoyl-L-lysyl-[protein] + holo-[ACP] + H(+). Its pathway is protein modification; protein lipoylation via endogenous pathway; protein N(6)-(lipoyl)lysine from octanoyl-[acyl-carrier-protein]: step 1/2. Functionally, catalyzes the transfer of endogenously produced octanoic acid from octanoyl-acyl-carrier-protein onto the lipoyl domains of lipoate-dependent enzymes. Lipoyl-ACP can also act as a substrate although octanoyl-ACP is likely to be the physiological substrate. The chain is Octanoyltransferase from Nitrobacter hamburgensis (strain DSM 10229 / NCIMB 13809 / X14).